The following is a 534-amino-acid chain: Blue-light-activated protein (534 aa).

Positions 20-93 (GKDIFFAAVE…QSIRDAIAQR (74 aa)) constitute a PAS domain. Cys70 is subject to S-4a-FMN cysteine. Residues 94–148 (NDISAEIINYRKDGSSFWNALFISPVYNDAGDLIYFFASQLDISRRKDAEEALRQ) enclose the PAC domain. Residues 161-390 (GIAHDFNNLL…TLRLYFPVDE (230 aa)) enclose the Histidine kinase domain. His164 is modified (phosphohistidine; by autocatalysis). The Response regulatory domain occupies 411 to 527 (RILIVEDRPD…DLARKVRQVL (117 aa)). Asp461 is modified (4-aspartylphosphate).

In terms of processing, FMN binds covalently to cysteine after exposure to blue light and this bond is spontaneously broken in the dark.

The enzyme catalyses ATP + protein L-histidine = ADP + protein N-phospho-L-histidine.. Its function is as follows. Photosensitive kinase and response regulator that is involved in increased bacterial virulence upon exposure to light. The chain is Blue-light-activated protein from Pseudomonas syringae pv. tomato (strain ATCC BAA-871 / DC3000).